The chain runs to 400 residues: Nicotinate phosphoribosyltransferase (400 aa).

His-220 carries the phosphohistidine; by autocatalysis modification.

It belongs to the NAPRTase family. Post-translationally, transiently phosphorylated on a His residue during the reaction cycle. Phosphorylation strongly increases the affinity for substrates and increases the rate of nicotinate D-ribonucleotide production. Dephosphorylation regenerates the low-affinity form of the enzyme, leading to product release.

The enzyme catalyses nicotinate + 5-phospho-alpha-D-ribose 1-diphosphate + ATP + H2O = nicotinate beta-D-ribonucleotide + ADP + phosphate + diphosphate. It functions in the pathway cofactor biosynthesis; NAD(+) biosynthesis; nicotinate D-ribonucleotide from nicotinate: step 1/1. In terms of biological role, catalyzes the synthesis of beta-nicotinate D-ribonucleotide from nicotinate and 5-phospho-D-ribose 1-phosphate at the expense of ATP. In Cronobacter sakazakii (strain ATCC BAA-894) (Enterobacter sakazakii), this protein is Nicotinate phosphoribosyltransferase.